A 499-amino-acid chain; its full sequence is Glucosylglycerol-phosphate synthase (499 aa).

Belongs to the glycosyltransferase 20 family. Interacts with GGP-P. Seems to be degraded, at least in vitro, by FtsH2. In an ftsH2 disruption strain inactive GGPS accumulates.

It is found in the cytoplasm. It catalyses the reaction ADP-alpha-D-glucose + sn-glycerol 3-phosphate = 2-O-(alpha-D-glucopyranosyl)-sn-glycerol 3-phosphate + ADP + H(+). It participates in glycan metabolism; glucosylglycerol biosynthesis. Involved in salt tolerance by producing GG-phosphate from ADP-glucose and glycerol-3-phosphate (G3P), an intermediate in the synthesis of the osmolyte glucosylglycerol (GG). The sequence is that of Glucosylglycerol-phosphate synthase (ggpS) from Synechocystis sp. (strain ATCC 27184 / PCC 6803 / Kazusa).